The primary structure comprises 119 residues: Large ribosomal subunit protein bL20 (119 aa).

This sequence belongs to the bacterial ribosomal protein bL20 family.

Binds directly to 23S ribosomal RNA and is necessary for the in vitro assembly process of the 50S ribosomal subunit. It is not involved in the protein synthesizing functions of that subunit. This is Large ribosomal subunit protein bL20 from Deinococcus geothermalis (strain DSM 11300 / CIP 105573 / AG-3a).